Consider the following 352-residue polypeptide: Zona pellucida-binding protein 2 (352 aa).

A signal peptide spans 1–28; it reads MAGGGGRPCSPQRALLGMVAIMAVVAEA. Residues N110 and N309 are each glycosylated (N-linked (GlcNAc...) asparagine).

Belongs to the zona pellucida-binding protein Sp38 family.

It is found in the secreted. The protein localises to the cytoplasmic vesicle. Its subcellular location is the secretory vesicle. It localises to the acrosome. Functionally, may be implicated in the gamete interaction during fertilization. The polypeptide is Zona pellucida-binding protein 2 (ZPBP2) (Gallus gallus (Chicken)).